Consider the following 270-residue polypeptide: Methylthioribulose-1-phosphate dehydratase (270 aa).

Substrate is bound at residue Cys-122. The Zn(2+) site is built by His-140 and His-142. Catalysis depends on Glu-165, which acts as the Proton donor/acceptor. Position 230 (His-230) interacts with Zn(2+).

It belongs to the aldolase class II family. MtnB subfamily. Requires Zn(2+) as cofactor.

It is found in the cytoplasm. It catalyses the reaction 5-(methylsulfanyl)-D-ribulose 1-phosphate = 5-methylsulfanyl-2,3-dioxopentyl phosphate + H2O. Its pathway is amino-acid biosynthesis; L-methionine biosynthesis via salvage pathway; L-methionine from S-methyl-5-thio-alpha-D-ribose 1-phosphate: step 2/6. Its function is as follows. Catalyzes the dehydration of methylthioribulose-1-phosphate (MTRu-1-P) into 2,3-diketo-5-methylthiopentyl-1-phosphate (DK-MTP-1-P). This is Methylthioribulose-1-phosphate dehydratase from Candida albicans (strain SC5314 / ATCC MYA-2876) (Yeast).